Here is a 196-residue protein sequence, read N- to C-terminus: Pyridoxal 5'-phosphate synthase subunit PdxT (196 aa).

Position 47–49 (47–49 (GES)) interacts with L-glutamine. Cys79 serves as the catalytic Nucleophile. L-glutamine-binding positions include Arg106 and 134 to 135 (IR). Residues His170 and Glu172 each act as charge relay system in the active site.

This sequence belongs to the glutaminase PdxT/SNO family. As to quaternary structure, in the presence of PdxS, forms a dodecamer of heterodimers. Only shows activity in the heterodimer.

It catalyses the reaction aldehydo-D-ribose 5-phosphate + D-glyceraldehyde 3-phosphate + L-glutamine = pyridoxal 5'-phosphate + L-glutamate + phosphate + 3 H2O + H(+). The catalysed reaction is L-glutamine + H2O = L-glutamate + NH4(+). Its pathway is cofactor biosynthesis; pyridoxal 5'-phosphate biosynthesis. Functionally, catalyzes the hydrolysis of glutamine to glutamate and ammonia as part of the biosynthesis of pyridoxal 5'-phosphate. The resulting ammonia molecule is channeled to the active site of PdxS. The polypeptide is Pyridoxal 5'-phosphate synthase subunit PdxT (Bacillus licheniformis (strain ATCC 14580 / DSM 13 / JCM 2505 / CCUG 7422 / NBRC 12200 / NCIMB 9375 / NCTC 10341 / NRRL NRS-1264 / Gibson 46)).